Reading from the N-terminus, the 1247-residue chain is Clustered mitochondria protein homolog (1247 aa).

The segment at M1 to D43 is disordered. The span at G30–S39 shows a compositional bias: polar residues. Positions S329–L579 constitute a Clu domain. Residues G1222 to D1247 are disordered.

It belongs to the CLU family.

The protein localises to the cytoplasm. Functionally, mRNA-binding protein involved in proper cytoplasmic distribution of mitochondria. In Caenorhabditis elegans, this protein is Clustered mitochondria protein homolog.